We begin with the raw amino-acid sequence, 359 residues long: MDDQDPGGISPLQQMVASGAGAVVTSLFMTPLDVVKVRLQSQRPTVASELTTPSRFWSLSYTKSPSTLQSPGKCLLYCNGVLEPLYLCPNGTRCATWFQDPTRFTGTLDAFVKIVRHEGTRTLWSGLPATLVMTVPATAIYFTAYDQLKAFLCGQSLTSDLYAPMVAGALARMGTVTVVSPLELVRTKLQAQHVSYRELAACVQAAVAQGGWRSLWLGWGPTALRDVPFSALYWFNYELVKSQLNGPRQKEQTSVGISFVAGGISGMVAATLTLPFDVVKTQRQMSLGAVEAMRVKPPRVDSTWLLLRRIQAESGTRGLFAGFLPRIIKAAPSCAIMISTYEFGKSFFHRLNQEQPLGH.

Over 1-14 (MDDQDPGGISPLQQ) the chain is Mitochondrial intermembrane. Solcar repeat units lie at residues 9 to 151 (ISPL…LKAF), 159 to 243 (SDLY…VKSQ), and 253 to 347 (TSVG…GKSF). The chain crosses the membrane as a helical span at residues 15–35 (MVASGAGAVVTSLFMTPLDVV). The Mitochondrial matrix segment spans residues 36–121 (KVRLQSQRPT…VKIVRHEGTR (86 aa)). Residues Cys74, Cys78, Cys88, and Cys94 each coordinate [2Fe-2S] cluster. The helical transmembrane segment at 122–142 (TLWSGLPATLVMTVPATAIYF) threads the bilayer. Residues 143 to 164 (TAYDQLKAFLCGQSLTSDLYAP) lie on the Mitochondrial intermembrane side of the membrane. The helical transmembrane segment at 165 to 185 (MVAGALARMGTVTVVSPLELV) threads the bilayer. At 186 to 214 (RTKLQAQHVSYRELAACVQAAVAQGGWRS) the chain is on the mitochondrial matrix side. Residues 215-235 (LWLGWGPTALRDVPFSALYWF) form a helical membrane-spanning segment. Over 236 to 255 (NYELVKSQLNGPRQKEQTSV) the chain is Mitochondrial intermembrane. Residues 256-276 (GISFVAGGISGMVAATLTLPF) traverse the membrane as a helical segment. The Mitochondrial matrix segment spans residues 277–317 (DVVKTQRQMSLGAVEAMRVKPPRVDSTWLLLRRIQAESGTR). A helical transmembrane segment spans residues 318-338 (GLFAGFLPRIIKAAPSCAIMI). Topologically, residues 339-359 (STYEFGKSFFHRLNQEQPLGH) are mitochondrial intermembrane.

Belongs to the mitochondrial carrier (TC 2.A.29) family. In terms of processing, cleaved and degraded by AFG3L2; degradation by AFG3L2 is regulated by the ability of SLC25A39 to bind iron-sulfur. In absence of mitochondrial glutathione, SLC25A39 binds iron-sulfur, preventing cleavage and degradation by AFG3L2. The presence of mitochondrial glutathione prevents iron-sulfur-binding to SLC25A39, promoting cleavage and degradation by AFG3L2.

Its subcellular location is the mitochondrion inner membrane. The enzyme catalyses glutathione(in) = glutathione(out). Its activity is regulated as follows. The activity of SLC25A39 is regulated by levels of mitochondrial glutathione via its ability to bind [2Fe-2S] iron-sulfur cluster. Upon physiological levels of mitochondrial glutathione, glutathione prevents iron-sulfur-binding to SLC25A39 promoting cleavage and degradation by AFG3L2. Upon depletion of mitochondrial glutathione, SLC25A39 binds iron-sulfur, preventing cleavage and degradation by AFG3L2. Functionally, mitochondrial transporter required for glutathione import into mitochondria. Glutathione, which plays key roles in oxidative metabolism, is produced exclusively in the cytosol and is imported in many organelles. Mitochondrial glutathione is required for the activity and stability of proteins containing iron-sulfur clusters, as well as erythropoiesis. The polypeptide is Mitochondrial glutathione transporter SLC25A39 (Slc25a39) (Rattus norvegicus (Rat)).